We begin with the raw amino-acid sequence, 101 residues long: Eukaryotic translation initiation factor 4E-binding protein 3 (101 aa).

Residues 1-28 (MSSSTSCPIPGCRDQLPDGYSTTPGGTL) form a disordered region. The short motif at 40–46 (YDRKFLL) is the YXXXXLphi motif element. A TOS motif motif is present at residues 97-101 (FEMDM).

The protein belongs to the eIF4E-binding protein family. Interacts with EIF4E. Interacts with RPA2 (via N-terminus); the interaction enhances EIF4EBP3-mediated inhibition of EIF4E-mediated mRNA nuclear export. Post-translationally, phosphorylated.

The protein localises to the cytoplasm. The protein resides in the nucleus. In terms of biological role, repressor of translation initiation that regulates EIF4E activity by preventing its assembly into the eIF4F complex: the hypophosphorylated form competes with EIF4G1/EIF4G3 and strongly binds to EIF4E, leading to repression of translation. In contrast, the hyperphosphorylated form dissociates from EIF4E, allowing interaction between EIF4G1/EIF4G3 and EIF4E, leading to initiation of translation. Inhibits EIF4E-mediated mRNA nuclear export. The sequence is that of Eukaryotic translation initiation factor 4E-binding protein 3 (Eif4ebp3) from Mus musculus (Mouse).